The sequence spans 178 residues: MNPFHDLEPGPNVPEVVYALIEIPKGSRNKYELDKKTGLLKLDRVLYSPFFYPVDYGIIPRTWYDDDDPFDIMVIMREPTYPLTIIEARPIGLFKMIDSGDKDYKVLAVPVEDPYFKDWKDIDDVPKAFLDEIAHFFKRYKELQGKEIIVEGWEGAEAAKREILRAIELYKEKFGSKE.

Substrate-binding residues include Lys-30, Arg-44, and Tyr-56. Residues Asp-66, Asp-71, and Asp-103 each coordinate Mg(2+). Tyr-140 provides a ligand contact to substrate.

It belongs to the PPase family. Homohexamer. Mg(2+) serves as cofactor.

Its subcellular location is the cytoplasm. It carries out the reaction diphosphate + H2O = 2 phosphate + H(+). Catalyzes the hydrolysis of inorganic pyrophosphate (PPi) forming two phosphate ions. This is Inorganic pyrophosphatase from Pyrococcus abyssi (strain GE5 / Orsay).